Here is a 1203-residue protein sequence, read N- to C-terminus: Chromosome partition protein Smc (1203 aa).

P32 to N39 lines the ATP pocket. Coiled-coil stretches lie at residues I167–K203, M250–Q288, and D327–K497. One can recognise an SMC hinge domain in the interval G511–G622. 3 coiled-coil regions span residues E657 to E689, R720 to Q765, and Y976 to L1030.

The protein belongs to the SMC family. In terms of assembly, homodimer.

It localises to the cytoplasm. In terms of biological role, required for chromosome condensation and partitioning. This is Chromosome partition protein Smc from Mycobacterium leprae (strain TN).